The following is a 294-amino-acid chain: HTH-type transcriptional regulator ClcR (294 aa).

Positions M1–T58 constitute an HTH lysR-type domain. The H-T-H motif DNA-binding region spans I18–Q37.

Belongs to the LysR transcriptional regulatory family.

It is found in the cytoplasm. Its function is as follows. Involved in regulation of chlorinated catechol metabolism. Transcriptional activator of the clcABD chlorocatechol oxidative operon. The sequence is that of HTH-type transcriptional regulator ClcR (clcR) from Pseudomonas putida (Arthrobacter siderocapsulatus).